The sequence spans 322 residues: AA9 family lytic polysaccharide monooxygenase A (322 aa).

Residues 1-15 (MKVLSLLAAASAASA) form the signal peptide. The Cu(2+) site is built by His-16 and His-96. Intrachain disulfides connect Cys-54/Cys-182 and Cys-152/Cys-237. O2-binding residues include His-168 and Gln-177. O-linked (Man...) threonine glycans are attached at residues Thr-228 and Thr-236. Residues 286-322 (CTAAQWAQCGGMGFSGCTTCASPYTCKKMNDYYSQCS) form the CBM1 domain.

The protein belongs to the polysaccharide monooxygenase AA9 family. Cu(2+) is required as a cofactor.

It is found in the secreted. The catalysed reaction is [(1-&gt;4)-beta-D-glucosyl]n+m + reduced acceptor + O2 = 4-dehydro-beta-D-glucosyl-[(1-&gt;4)-beta-D-glucosyl]n-1 + [(1-&gt;4)-beta-D-glucosyl]m + acceptor + H2O.. Lytic polysaccharide monooxygenase (LPMO) that depolymerizes crystalline and amorphous polysaccharides via the oxidation of scissile alpha- or beta-(1-4)-glycosidic bonds, yielding C4 oxidation products. Catalysis by LPMOs requires the reduction of the active-site copper from Cu(II) to Cu(I) by a reducing agent and H(2)O(2) or O(2) as a cosubstrate. Active on tamarind xyloglucan and konjac glucomannan. The polypeptide is AA9 family lytic polysaccharide monooxygenase A (gh61-1) (Neurospora crassa (strain ATCC 24698 / 74-OR23-1A / CBS 708.71 / DSM 1257 / FGSC 987)).